A 464-amino-acid chain; its full sequence is MSTDKTNQSWGGRFSEPVDAFVARFTASVTFDQRLYRHDIMGSIAHATMLAKVGVLTDAERDTIVDGLNTIQAEIEAGQFDWRVDLEDVHMNIEARLTDRIGITGKKLHTGRSRNDQVATDIRLWLRDEIDLILSEITRLQQGLLGQAEREAETIMPGFTHLQTAQPVTFGHHMLAWFEMLSRDYERLVDCRKRLNRMPLGSAALAGTTYPIDRELTCTLLGFEVVGGNSLDGVSDRDFAIEFCSAASIAMMHLSRFSEELVLWTSAQFQFIDLPDRFCTGSSIMPQKKNPDVPELVRGKSGRVFGALMGLLTLMKGQPLAYNKDNQEDKEPLFDAADTLRDSLRAFADMIPAIKPRHAMMREAALRGFSTATDLADYLVRRGLPFRDCHEIVGHAVKYGVETGKDLAEMSLEELRQFSNQIEQDVFAVLTLEGSVNARNHIGGTAPEQVRAAVIRGQELLAGR.

It belongs to the lyase 1 family. Argininosuccinate lyase subfamily.

The protein resides in the cytoplasm. It catalyses the reaction 2-(N(omega)-L-arginino)succinate = fumarate + L-arginine. It participates in amino-acid biosynthesis; L-arginine biosynthesis; L-arginine from L-ornithine and carbamoyl phosphate: step 3/3. This is Argininosuccinate lyase from Pseudomonas syringae pv. syringae (strain B728a).